Reading from the N-terminus, the 397-residue chain is Argininosuccinate synthase (397 aa).

Residue 8 to 16 (AYSGGLDTS) participates in ATP binding. Y87 contributes to the L-citrulline binding site. G117 is an ATP binding site. Residues T119, N123, and D124 each contribute to the L-aspartate site. N123 contacts L-citrulline. L-citrulline contacts are provided by R127, S175, E259, and Y271.

Belongs to the argininosuccinate synthase family. Type 1 subfamily. As to quaternary structure, homotetramer.

The protein resides in the cytoplasm. It carries out the reaction L-citrulline + L-aspartate + ATP = 2-(N(omega)-L-arginino)succinate + AMP + diphosphate + H(+). It participates in amino-acid biosynthesis; L-arginine biosynthesis; L-arginine from L-ornithine and carbamoyl phosphate: step 2/3. The protein is Argininosuccinate synthase of Streptomyces clavuligerus.